We begin with the raw amino-acid sequence, 480 residues long: Ribulose bisphosphate carboxylase large chain (480 aa).

Residues 1-2 (MS) constitute a propeptide that is removed on maturation. P3 is modified (N-acetylproline). N6,N6,N6-trimethyllysine is present on K14. N123 and T173 together coordinate substrate. K175 (proton acceptor) is an active-site residue. K177 contributes to the substrate binding site. Mg(2+) is bound by residues K201, D203, and E204. K201 carries the post-translational modification N6-carboxylysine. H294 acts as the Proton acceptor in catalysis. Substrate is bound by residues R295, H327, and S379.

It belongs to the RuBisCO large chain family. Type I subfamily. As to quaternary structure, heterohexadecamer of 8 large chains and 8 small chains; disulfide-linked. The disulfide link is formed within the large subunit homodimers. Mg(2+) serves as cofactor. In terms of processing, the disulfide bond which can form in the large chain dimeric partners within the hexadecamer appears to be associated with oxidative stress and protein turnover.

The protein resides in the plastid. It localises to the chloroplast. It carries out the reaction 2 (2R)-3-phosphoglycerate + 2 H(+) = D-ribulose 1,5-bisphosphate + CO2 + H2O. It catalyses the reaction D-ribulose 1,5-bisphosphate + O2 = 2-phosphoglycolate + (2R)-3-phosphoglycerate + 2 H(+). RuBisCO catalyzes two reactions: the carboxylation of D-ribulose 1,5-bisphosphate, the primary event in carbon dioxide fixation, as well as the oxidative fragmentation of the pentose substrate in the photorespiration process. Both reactions occur simultaneously and in competition at the same active site. The sequence is that of Ribulose bisphosphate carboxylase large chain from Rivina humilis (Rougeplant).